The sequence spans 66 residues: U-scoloptoxin(04)-Ssd2a (66 aa).

The first 19 residues, 1–19 (MKAIYILSVLLLMMLPILS), serve as a signal peptide directing secretion.

It belongs to the scoloptoxin-04 family. Contains 2 disulfide bonds. In terms of tissue distribution, expressed by the venom gland.

The protein resides in the secreted. This is U-scoloptoxin(04)-Ssd2a from Scolopendra dehaani (Thai centipede).